A 189-amino-acid polypeptide reads, in one-letter code: Elongation factor P (189 aa).

It belongs to the elongation factor P family.

The protein resides in the cytoplasm. It participates in protein biosynthesis; polypeptide chain elongation. Functionally, involved in peptide bond synthesis. Stimulates efficient translation and peptide-bond synthesis on native or reconstituted 70S ribosomes in vitro. Probably functions indirectly by altering the affinity of the ribosome for aminoacyl-tRNA, thus increasing their reactivity as acceptors for peptidyl transferase. This chain is Elongation factor P, found in Rhizobium radiobacter (Agrobacterium tumefaciens).